A 496-amino-acid polypeptide reads, in one-letter code: Probable uroporphyrinogen-III C-methyltransferase (496 aa).

It belongs to the precorrin methyltransferase family.

The catalysed reaction is uroporphyrinogen III + 2 S-adenosyl-L-methionine = precorrin-2 + 2 S-adenosyl-L-homocysteine + H(+). In terms of biological role, siroheme synthase involved in methionine biosynthesis. The sequence is that of Probable uroporphyrinogen-III C-methyltransferase from Schizosaccharomyces pombe (strain 972 / ATCC 24843) (Fission yeast).